Here is a 67-residue protein sequence, read N- to C-terminus: Probable Sec-independent protein translocase protein TatE (67 aa).

The chain crosses the membrane as a helical span at residues 4 to 21 (ISITKLLVVAALVVLLFG).

It belongs to the TatA/E family. TatE subfamily.

Its subcellular location is the cell inner membrane. In terms of biological role, part of the twin-arginine translocation (Tat) system that transports large folded proteins containing a characteristic twin-arginine motif in their signal peptide across membranes. TatE shares overlapping functions with TatA. The sequence is that of Probable Sec-independent protein translocase protein TatE from Shigella flexneri.